The following is a 66-amino-acid chain: Toxin Aah6 (66 aa).

Residues 2 to 65 (RDGYVVKNGT…LYGDDGTYCS (64 aa)) form the LCN-type CS-alpha/beta domain. Asparagine 9 carries an N-linked (GlcNAc...) asparagine glycan. 4 disulfides stabilise this stretch: cysteine 13–cysteine 64, cysteine 17–cysteine 40, cysteine 26–cysteine 45, and cysteine 30–cysteine 47.

Belongs to the long (4 C-C) scorpion toxin superfamily. Sodium channel inhibitor family. Beta subfamily. N-glycans are core-fucosylated, heterogeneous and short which could be the result of extensive trimming. As to expression, expressed by the venom gland.

It is found in the secreted. In terms of biological role, beta toxins bind voltage-independently at site-4 of sodium channels and shift the voltage of activation toward more negative potentials thereby affecting sodium channel activation and promoting spontaneous and repetitive firing. This toxin is active only on insects. This toxin has very low anti-insect activity. This Androctonus australis (Sahara scorpion) protein is Toxin Aah6.